The sequence spans 783 residues: Type 4 coupling protein DotL (783 aa).

The helical transmembrane segment at 47–67 threads the bilayer; that stretch reads VSYYFSEAATFLLIMGGIFFL. The interval 100–500 is ATPase domain; it reads NIARGITFFG…ICMKLEDPTE (401 aa). The interval 671 to 773 is interaction with IcmS/IcmW; it reads VEGALTIFSK…SAKISAEREK (103 aa).

The T4BSS is a complex nanomachine composed of several subcomplexes. This subunit is part of the Type IV Coupling Complex (T4CC), a subcomplex composed of the DotLMNYZ core and the IcmSW-LvgA adapter subunits, linked by the C-terminal tail of DotL. Six DotLMNYZ hetero-pentameric units may assemble into a hexameric nanomachine, forming an inner membrane channel for effectors to pass through. Interacts directly with DotM. Interacts directly, via its C-terminal region, with the type IV adapter proteins IcmS and IcmW. Also interacts with DotN and LvgA via its C-terminal region.

Its subcellular location is the cell inner membrane. Its function is as follows. Component of the Dot/Icm type IVB secretion system (T4BSS), which is used to inject bacterial effector proteins into eukaryotic host cells. Part of a subcomplex which recruits effector proteins and delivers them to the core transmembrane subcomplex. Plays a central role in the assembly of the subcomplex. Required for the recruitment of IcmS and IcmW to the inner membrane and for the translocation of adapter-dependent substrates. May have ATPase activity. In Legionella pneumophila subsp. pneumophila (strain Philadelphia 1 / ATCC 33152 / DSM 7513), this protein is Type 4 coupling protein DotL.